A 200-amino-acid chain; its full sequence is Recombination protein RecR (200 aa).

The C4-type zinc-finger motif lies at 57–72; that stretch reads CRQCRTLTEEELCPQC. A Toprim domain is found at 80–175; the sequence is TLLCVVEGPM…ITSRIAHGVP (96 aa).

It belongs to the RecR family.

May play a role in DNA repair. It seems to be involved in an RecBC-independent recombinational process of DNA repair. It may act with RecF and RecO. The protein is Recombination protein RecR of Pseudomonas fluorescens (strain SBW25).